The primary structure comprises 143 residues: Large ribosomal subunit protein uL11 (143 aa).

The protein belongs to the universal ribosomal protein uL11 family. Part of the ribosomal stalk of the 50S ribosomal subunit. Interacts with L10 and the large rRNA to form the base of the stalk. L10 forms an elongated spine to which L12 dimers bind in a sequential fashion forming a multimeric L10(L12)X complex. In terms of processing, one or more lysine residues are methylated.

Forms part of the ribosomal stalk which helps the ribosome interact with GTP-bound translation factors. The polypeptide is Large ribosomal subunit protein uL11 (Bifidobacterium longum (strain DJO10A)).